The following is a 688-amino-acid chain: Large T antigen (688 aa).

The residue at position 1 (Met1) is an N-acetylmethionine; by host. One can recognise a J domain in the interval 12–75 (ELMDLLGLDR…VKVAHQPDFG (64 aa)). An LXCXE motif motif is present at residues 105 to 109 (LFCHE). Ser114, Ser121, and Ser124 each carry phosphoserine; by host. The interval 115-135 (DDENTGSQHSTPPKKKKKVED) is disordered. Thr125 is modified (phosphothreonine; by host). Positions 126–133 (PPKKKKKV) match the Nuclear localization signal motif. Residues 140 to 255 (PVDLHAFLSQ…EESIQGGLKE (116 aa)) constitute a DNA-binding region (T-ag OBD). The T-ag D1-type zinc-finger motif lies at 266–358 (TKQVSWKLVT…QRVDSIHMTR (93 aa)). Positions 303, 306, 314, and 318 each coordinate Zn(2+). Positions 401–561 (QMDTVIYDFL…AYLRKSLSCS (161 aa)) constitute an SF3 helicase domain. 427–434 (GPIDSGKT) is an ATP binding site. Residues 632–658 (EEDSEAEDSGHGSSTESQSQCFSQVSE) form a disordered region. Positions 642-658 (HGSSTESQSQCFSQVSE) are enriched in polar residues. Ser660 bears the Phosphoserine; by host mark. Position 680 is an N6-acetyllysine; by host (Lys680). At Thr684 the chain carries Phosphothreonine; by host.

As to quaternary structure, forms homohexamers in the presence of ATP. Interacts with host HDAC1. Interacts (via LXCXE domain) with host RB1; the interaction induces the aberrant dissociation of RB1-E2F1 complex thereby disrupting RB1's activity. Interacts (via LXCXE domain) with host pRB-related proteins RBL1 and RBL2. Interacts (via C-terminus) with host TOP1 and POLA1 allowing DNA replication. Interacts with host TP53, inhibiting TP53 binding to DNA. Interacts with host preinitiation complex components TBP, TFIIA and TFIID to regulate transcription initiation. Mg(2+) serves as cofactor. Phosphorylated on both serine and threonine residues. Small t antigen inhibits the dephosphorylation by the AC form of PP2A. In terms of processing, O-Glycosylated near the C-terminal region. Post-translationally, acetylated by CBP in a TP53-dependent manner.

It localises to the host nucleus. It catalyses the reaction Couples ATP hydrolysis with the unwinding of duplex DNA by translocating in the 3'-5' direction.. It carries out the reaction ATP + H2O = ADP + phosphate + H(+). In terms of biological role, isoform large T antigen is a key early protein essential for both driving viral replication and inducing cellular transformation. Plays a role in viral genome replication by driving entry of quiescent cells into the cell cycle and by autoregulating the synthesis of viral early mRNA. Displays highly oncogenic activities by corrupting the host cellular checkpoint mechanisms that guard cell division and the transcription, replication, and repair of DNA. Participates in the modulation of cellular gene expression preceeding viral DNA replication. This step involves binding to host key cell cycle regulators retinoblastoma protein RB1/pRb and TP53. Induces the disassembly of host E2F1 transcription factors from RB1, thus promoting transcriptional activation of E2F1-regulated S-phase genes. Inhibits host TP53 binding to DNA, abrogating the ability of TP53 to stimulate gene expression. Plays the role of a TFIID-associated factor (TAF) in transcription initiation for all three RNA polymerases, by stabilizing the TBP-TFIIA complex on promoters. Initiates viral DNA replication and unwinding via interactions with the viral origin of replication. Binds two adjacent sites in the SV40 origin. The replication fork movement is facilitated by Large T antigen helicase activity. Has processive 3'-5' DNA helicase activity which requires a short 3' single-stranded region and ATP. Activates the transcription of viral late mRNA, through host TBP and TFIIA stabilization. Interferes with histone deacetylation mediated by HDAC1, leading to activation of transcription. The chain is Large T antigen from JC polyomavirus (JCPyV).